The primary structure comprises 170 residues: uncharacterized protein (170 aa).

This is an uncharacterized protein from Acidithiobacillus ferrooxidans (Thiobacillus ferrooxidans).